Reading from the N-terminus, the 71-residue chain is Protein SlyX homolog (71 aa).

Belongs to the SlyX family.

The protein is Protein SlyX homolog of Thioalkalivibrio sulfidiphilus (strain HL-EbGR7).